The chain runs to 145 residues: Acidic phospholipase A2 1 (145 aa).

An N-terminal signal peptide occupies residues 1-21 (MYPAHLLVLLAVCVSLLGATA). A propeptide spanning residues 22–27 (IPPLPL) is cleaved from the precursor. Cystine bridges form between Cys-38–Cys-98, Cys-54–Cys-144, Cys-56–Cys-72, Cys-71–Cys-125, Cys-78–Cys-118, Cys-87–Cys-111, and Cys-105–Cys-116. Ca(2+) is bound by residues Tyr-55, Gly-57, and Gly-59. His-75 is an active-site residue. Asp-76 lines the Ca(2+) pocket. Asp-119 is a catalytic residue.

The protein belongs to the phospholipase A2 family. Group I subfamily. D49 sub-subfamily. As to quaternary structure, monomer. It depends on Ca(2+) as a cofactor. As to expression, expressed by the venom gland.

Its subcellular location is the secreted. The catalysed reaction is a 1,2-diacyl-sn-glycero-3-phosphocholine + H2O = a 1-acyl-sn-glycero-3-phosphocholine + a fatty acid + H(+). In terms of biological role, PLA2 catalyzes the calcium-dependent hydrolysis of the 2-acyl groups in 3-sn-phosphoglycerides. The protein is Acidic phospholipase A2 1 of Laticauda semifasciata (Black-banded sea krait).